The chain runs to 197 residues: Beta-crystallin A2 (197 aa).

The N-terminal arm stretch occupies residues 1 to 11; sequence MSSASAPGPAP. Beta/gamma crystallin 'Greek key' domains are found at residues 12-52 and 53-99; these read ACLT…KVEN and GAWV…RPVL. The segment at 100-105 is connecting peptide; that stretch reads CANHSD. 2 Beta/gamma crystallin 'Greek key' domains span residues 106 to 147 and 148 to 196; these read SRVT…KVSS and GAWV…RRVQ.

Belongs to the beta/gamma-crystallin family. In terms of assembly, homo/heterodimer, or complexes of higher-order. The structure of beta-crystallin oligomers seems to be stabilized through interactions between the N-terminal arms.

In terms of biological role, crystallins are the dominant structural components of the vertebrate eye lens. This Oryctolagus cuniculus (Rabbit) protein is Beta-crystallin A2 (CRYBA2).